Consider the following 519-residue polypeptide: MSRQFSSQSAFSSRSRRVYSTRSSSGFGGGRQILVSVGQSRRCGGDYGGGFSSRSLYSLGGSKSIFGGLVGRSASGFCQSRGAGGGFGGGFGGGRSFGGGGFGGGYGGGGRFGGGFGGGFGTSNFGLGGFGPSYPPGGIHEVTVNQSLLEPLHLEVDPEIQKIKTQEREQIKTLNNKFASFIDKVRFLEQQNQVLQTKWELLQQVNTSTRTSSLEPIFEEFINQLQRQVDVLTNEQLRQNSEIRSMQDIVEDYKNKYEDEINKRTNSENDFVVLKKDVDAAFMAKSDLQSRVDTLYGEINFLKYLFDTELSQIQTHVSDTNVILSMDNNRSLDLDSIINAVRTQYELIAQKSKDEAEALYQTKYQELQITAGKHGDDLKNSKMEISELNRNAQRLQAEIANIKKQIEQMHGSISDAEERGERALQDAKQKLQETEEALQQMKEDLARLLRDYQALLGAKLSLDVEIATYRELLEGEESRMSGALQSQVSIWALPSNEGNDLGERLHDPQSQVPVPKLGC.

A head region spans residues 1 to 166 (MSRQFSSQSA…DPEIQKIKTQ (166 aa)). Omega-N-methylarginine occurs at positions 81 and 95. Positions 167 to 202 (EREQIKTLNNKFASFIDKVRFLEQQNQVLQTKWELL) are coil 1A. The region spanning 167-480 (EREQIKTLNN…ELLEGEESRM (314 aa)) is the IF rod domain. The interval 203-221 (QQVNTSTRTSSLEPIFEEF) is linker 1. Positions 222–313 (INQLQRQVDV…YLFDTELSQI (92 aa)) are coil 1B. The segment at 314–337 (QTHVSDTNVILSMDNNRSLDLDSI) is linker 12. Residues 338-476 (INAVRTQYEL…ATYRELLEGE (139 aa)) are coil 2. The interval 477–519 (ESRMSGALQSQVSIWALPSNEGNDLGERLHDPQSQVPVPKLGC) is tail. Residues 499 to 519 (NDLGERLHDPQSQVPVPKLGC) are disordered.

This sequence belongs to the intermediate filament family. In terms of processing, undergoes deimination of some arginine residues (citrullination).

In Rattus norvegicus (Rat), this protein is Keratin, type II cytoskeletal 1b (Krt77).